The primary structure comprises 276 residues: Probable endonuclease 4 (276 aa).

The Zn(2+) site is built by histidine 70, histidine 108, glutamate 143, aspartate 176, histidine 179, histidine 210, aspartate 223, histidine 225, and glutamate 255.

Belongs to the AP endonuclease 2 family. Requires Zn(2+) as cofactor.

It carries out the reaction Endonucleolytic cleavage to 5'-phosphooligonucleotide end-products.. Its function is as follows. Endonuclease IV plays a role in DNA repair. It cleaves phosphodiester bonds at apurinic or apyrimidinic (AP) sites, generating a 3'-hydroxyl group and a 5'-terminal sugar phosphate. This Mesomycoplasma hyopneumoniae (strain 7448) (Mycoplasma hyopneumoniae) protein is Probable endonuclease 4.